Consider the following 493-residue polypeptide: Lysine--tRNA ligase (493 aa).

Glutamate 402 and glutamate 409 together coordinate Mg(2+).

This sequence belongs to the class-II aminoacyl-tRNA synthetase family. Homodimer. Mg(2+) serves as cofactor.

The protein localises to the cytoplasm. The enzyme catalyses tRNA(Lys) + L-lysine + ATP = L-lysyl-tRNA(Lys) + AMP + diphosphate. The sequence is that of Lysine--tRNA ligase from Ureaplasma urealyticum serovar 10 (strain ATCC 33699 / Western).